A 356-amino-acid chain; its full sequence is 3-isopropylmalate dehydrogenase (356 aa).

Substrate-binding residues include Arg95, Arg105, Arg133, and Asp223. The Mg(2+) site is built by Asp223, Asp247, and Asp251. Gly281–Asn293 serves as a coordination point for NAD(+).

Belongs to the isocitrate and isopropylmalate dehydrogenases family. LeuB type 1 subfamily. In terms of assembly, homodimer. Requires Mg(2+) as cofactor. Mn(2+) is required as a cofactor.

The protein localises to the cytoplasm. It carries out the reaction (2R,3S)-3-isopropylmalate + NAD(+) = 4-methyl-2-oxopentanoate + CO2 + NADH. The protein operates within amino-acid biosynthesis; L-leucine biosynthesis; L-leucine from 3-methyl-2-oxobutanoate: step 3/4. Its function is as follows. Catalyzes the oxidation of 3-carboxy-2-hydroxy-4-methylpentanoate (3-isopropylmalate) to 3-carboxy-4-methyl-2-oxopentanoate. The product decarboxylates to 4-methyl-2 oxopentanoate. The sequence is that of 3-isopropylmalate dehydrogenase from Neisseria meningitidis serogroup A / serotype 4A (strain DSM 15465 / Z2491).